The following is a 479-amino-acid chain: Cardiolipin synthase A (479 aa).

The next 2 helical transmembrane spans lie at 8-28 and 38-58; these read IFGY…IHAV and IAWA…YLVF. 2 PLD phosphodiesterase domains span residues 218 to 245 and 392 to 419; these read VNFR…GDEY and QPGF…DNRS. Catalysis depends on residues H223, K225, D230, H397, K399, and D404.

The protein belongs to the phospholipase D family. Cardiolipin synthase subfamily. ClsA sub-subfamily.

It is found in the cell inner membrane. It carries out the reaction 2 a 1,2-diacyl-sn-glycero-3-phospho-(1'-sn-glycerol) = a cardiolipin + glycerol. Its function is as follows. Catalyzes the reversible phosphatidyl group transfer from one phosphatidylglycerol molecule to another to form cardiolipin (CL) (diphosphatidylglycerol) and glycerol. This is Cardiolipin synthase A from Pseudomonas fluorescens (strain ATCC BAA-477 / NRRL B-23932 / Pf-5).